The sequence spans 92 residues: RQC P-site tRNA stabilizing factor (92 aa).

An S4 RNA-binding domain is found at 5–65 (MRLDKYLKVS…GPKIVTAKIE (61 aa)).

The protein belongs to the RqcP family. In terms of assembly, associates with stalled 50S ribosomal subunits. Binds to RqcH, 23S rRNA and the P-site tRNA. Does not require RqcH for association with 50S subunits.

Key component of the ribosome quality control system (RQC), a ribosome-associated complex that mediates the extraction of incompletely synthesized nascent chains from stalled ribosomes and their subsequent degradation. RqcH recruits Ala-charged tRNA, and with RqcP directs the elongation of stalled nascent chains on 50S ribosomal subunits, leading to non-templated C-terminal alanine extensions (Ala tail). The Ala tail promotes nascent chain degradation. RqcP is associated with the translocation-like movement of the peptidyl-tRNA from the A-site into the P-site. The sequence is that of RQC P-site tRNA stabilizing factor from Listeria innocua serovar 6a (strain ATCC BAA-680 / CLIP 11262).